The primary structure comprises 152 residues: UPF0225 protein YchJ (152 aa).

The protein belongs to the UPF0225 family.

This Escherichia coli O81 (strain ED1a) protein is UPF0225 protein YchJ.